The following is a 493-amino-acid chain: MEKYFDRLEKEPLIAERWKKIEELESYGIKPFGKKYDKQIMIGDILKHKPEENLKFKTAGRIMSLRGKGKVYFAHIEDQSGKIQIYIKKDELGEEQFDHIVKMLNVGDIIGLEGELFITHTEELTLRVKSIALLTKNVRSLPEKYHGLTDVEIRYRKRYVDLIMNPEVRETFIKRTKIIKAIRKYLDDRGFLEVETPIMHPILGGAAAKPFITHHNTLNIDLFLRIAPELYLKKLIVGGFERVYDLNRNFRNEGISTRHNPEFTMVELYQAHADFNDMMDLCEGIISSVCQEINGTTDIEYDGVQLSLKNFNRVHMVDMIKEVTGVDFWKEMTFEEAKKLAKEHHVEVADHMNSVGHIINEFFEQKCEEKVIQPTFVYGHPVEISPLAKRNEDNPNFTDRFELFINKREYANAFTELNDPADQRGRFEAQVEEAMRGNEEATPEIDESFVEALEYGLPPTGGMGIGIDRLVMLLTGAPSIRDVILFPQMKPRD.

Mg(2+) is bound by residues E402 and E409.

It belongs to the class-II aminoacyl-tRNA synthetase family. As to quaternary structure, homodimer. The cofactor is Mg(2+).

Its subcellular location is the cytoplasm. It catalyses the reaction tRNA(Lys) + L-lysine + ATP = L-lysyl-tRNA(Lys) + AMP + diphosphate. This Fusobacterium nucleatum subsp. nucleatum (strain ATCC 25586 / DSM 15643 / BCRC 10681 / CIP 101130 / JCM 8532 / KCTC 2640 / LMG 13131 / VPI 4355) protein is Lysine--tRNA ligase.